The primary structure comprises 110 residues: ATP synthase subunit c (110 aa).

3 consecutive transmembrane segments (helical) span residues phenylalanine 4–alanine 24, alanine 37–glycine 57, and phenylalanine 81–isoleucine 101.

This sequence belongs to the ATPase C chain family. F-type ATPases have 2 components, F(1) - the catalytic core - and F(0) - the membrane proton channel. F(1) has five subunits: alpha(3), beta(3), gamma(1), delta(1), epsilon(1). F(0) has three main subunits: a(1), b(2) and c(10-14). The alpha and beta chains form an alternating ring which encloses part of the gamma chain. F(1) is attached to F(0) by a central stalk formed by the gamma and epsilon chains, while a peripheral stalk is formed by the delta and b chains.

Its subcellular location is the cell inner membrane. F(1)F(0) ATP synthase produces ATP from ADP in the presence of a proton or sodium gradient. F-type ATPases consist of two structural domains, F(1) containing the extramembraneous catalytic core and F(0) containing the membrane proton channel, linked together by a central stalk and a peripheral stalk. During catalysis, ATP synthesis in the catalytic domain of F(1) is coupled via a rotary mechanism of the central stalk subunits to proton translocation. Its function is as follows. Key component of the F(0) channel; it plays a direct role in translocation across the membrane. A homomeric c-ring of between 10-14 subunits forms the central stalk rotor element with the F(1) delta and epsilon subunits. The polypeptide is ATP synthase subunit c (Thermodesulfovibrio yellowstonii (strain ATCC 51303 / DSM 11347 / YP87)).